We begin with the raw amino-acid sequence, 93 residues long: Putative pterin-4-alpha-carbinolamine dehydratase (93 aa).

The protein belongs to the pterin-4-alpha-carbinolamine dehydratase family.

It catalyses the reaction (4aS,6R)-4a-hydroxy-L-erythro-5,6,7,8-tetrahydrobiopterin = (6R)-L-erythro-6,7-dihydrobiopterin + H2O. The sequence is that of Putative pterin-4-alpha-carbinolamine dehydratase from Nostoc punctiforme (strain ATCC 29133 / PCC 73102).